A 383-amino-acid polypeptide reads, in one-letter code: uncharacterized protein (383 aa).

Belongs to the peptidase M20 family.

This is an uncharacterized protein from Staphylococcus haemolyticus (strain JCSC1435).